A 436-amino-acid polypeptide reads, in one-letter code: 3-ketoacyl-CoA thiolase (436 aa).

The active-site Acyl-thioester intermediate is C99. Residues H392 and C422 each act as proton acceptor in the active site.

Belongs to the thiolase-like superfamily. Thiolase family. As to quaternary structure, heterotetramer of two alpha chains (FadJ) and two beta chains (FadI).

The protein localises to the cytoplasm. The catalysed reaction is an acyl-CoA + acetyl-CoA = a 3-oxoacyl-CoA + CoA. The protein operates within lipid metabolism; fatty acid beta-oxidation. Its function is as follows. Catalyzes the final step of fatty acid oxidation in which acetyl-CoA is released and the CoA ester of a fatty acid two carbons shorter is formed. The chain is 3-ketoacyl-CoA thiolase from Shewanella putrefaciens (strain CN-32 / ATCC BAA-453).